The primary structure comprises 307 residues: ATP synthase gamma chain (307 aa).

It belongs to the ATPase gamma chain family. As to quaternary structure, F-type ATPases have 2 components, CF(1) - the catalytic core - and CF(0) - the membrane proton channel. CF(1) has five subunits: alpha(3), beta(3), gamma(1), delta(1), epsilon(1). CF(0) has three main subunits: a, b and c.

The protein resides in the cell membrane. In terms of biological role, produces ATP from ADP in the presence of a proton gradient across the membrane. The gamma chain is believed to be important in regulating ATPase activity and the flow of protons through the CF(0) complex. The polypeptide is ATP synthase gamma chain (Mycolicibacterium smegmatis (strain ATCC 700084 / mc(2)155) (Mycobacterium smegmatis)).